The primary structure comprises 166 residues: Protein SprT (166 aa).

The SprT-like domain occupies 19–164 (RDALARANLK…CVRCGDTLVA (146 aa)). A Zn(2+)-binding site is contributed by histidine 78. The active site involves glutamate 79. Histidine 82 is a Zn(2+) binding site.

The protein belongs to the SprT family. Requires Zn(2+) as cofactor.

The protein resides in the cytoplasm. This is Protein SprT from Cronobacter sakazakii (strain ATCC BAA-894) (Enterobacter sakazakii).